The chain runs to 199 residues: dITP/XTP pyrophosphatase (199 aa).

Position 8–13 (8–13 (TSNKNK)) interacts with substrate. Positions 40 and 68 each coordinate Mg(2+). D68 acts as the Proton acceptor in catalysis. Residues S69, 154–157 (FGYD), K177, and 182–183 (HR) contribute to the substrate site.

It belongs to the HAM1 NTPase family. As to quaternary structure, homodimer. It depends on Mg(2+) as a cofactor.

It carries out the reaction XTP + H2O = XMP + diphosphate + H(+). The enzyme catalyses dITP + H2O = dIMP + diphosphate + H(+). It catalyses the reaction ITP + H2O = IMP + diphosphate + H(+). Its function is as follows. Pyrophosphatase that catalyzes the hydrolysis of nucleoside triphosphates to their monophosphate derivatives, with a high preference for the non-canonical purine nucleotides XTP (xanthosine triphosphate), dITP (deoxyinosine triphosphate) and ITP. Seems to function as a house-cleaning enzyme that removes non-canonical purine nucleotides from the nucleotide pool, thus preventing their incorporation into DNA/RNA and avoiding chromosomal lesions. The chain is dITP/XTP pyrophosphatase from Wigglesworthia glossinidia brevipalpis.